A 131-amino-acid chain; its full sequence is Small ribosomal subunit protein uS11 (131 aa).

It belongs to the universal ribosomal protein uS11 family. In terms of assembly, part of the 30S ribosomal subunit. Interacts with proteins S7 and S18. Binds to IF-3.

Its function is as follows. Located on the platform of the 30S subunit, it bridges several disparate RNA helices of the 16S rRNA. Forms part of the Shine-Dalgarno cleft in the 70S ribosome. The polypeptide is Small ribosomal subunit protein uS11 (Trichormus variabilis (strain ATCC 29413 / PCC 7937) (Anabaena variabilis)).